Reading from the N-terminus, the 298-residue chain is Tyrosine recombinase XerC (298 aa).

Positions 2–88 (TDLHTDVERY…ALRSFFDWLV (87 aa)) constitute a Core-binding (CB) domain. Residues 109 to 288 (HLPKNIDVDD…DFQHLASVYD (180 aa)) enclose the Tyr recombinase domain. Active-site residues include arginine 148, lysine 172, histidine 240, arginine 243, and histidine 266. Catalysis depends on tyrosine 275, which acts as the O-(3'-phospho-DNA)-tyrosine intermediate.

This sequence belongs to the 'phage' integrase family. XerC subfamily. In terms of assembly, forms a cyclic heterotetrameric complex composed of two molecules of XerC and two molecules of XerD, in which XerC interacts with XerD via its C-terminal region, XerD interacts with XerC via its C-terminal region and so on.

The protein localises to the cytoplasm. FtsK may regulate the catalytic switch between XerC and XerD in the heterotetrameric complex during the two steps of the recombination process. Its function is as follows. Site-specific tyrosine recombinase, which acts by catalyzing the cutting and rejoining of the recombining DNA molecules. Binds cooperatively to specific DNA consensus sequences that are separated from XerD binding sites by a short central region, forming the heterotetrameric XerC-XerD complex that recombines DNA substrates. The complex is essential to convert dimers of the bacterial chromosome into monomers to permit their segregation at cell division. It also contributes to the segregational stability of plasmids. In the complex XerC specifically exchanges the top DNA strands. The protein is Tyrosine recombinase XerC of Shigella flexneri serotype 5b (strain 8401).